We begin with the raw amino-acid sequence, 264 residues long: MSKVTSSTLLKYKQEGRKFTALTAYDASFASAFDGEGIDVLLVGDSLGMVLQGHDDTLPVTTAEIAYHTRCVRRGIERSLLIADMPFMSYATPEQAMENATALMQAGANMVKLEGGHWLLETVTKLTERGIPVCAHLGLTPQSVHVFGGFKVQGRDAENAQRILDEAKALEAAGAQLLVVECIPASLATAITQALTIPVIGIGAGATTDGQILVMHDVLGISSGYIPRFSKNYLKQTGEIRSAVRAYIEEVANGSFPSADHTFN.

Mg(2+) contacts are provided by aspartate 45 and aspartate 84. 3-methyl-2-oxobutanoate contacts are provided by residues 45–46, aspartate 84, and lysine 112; that span reads DS. Glutamate 114 lines the Mg(2+) pocket. Glutamate 181 acts as the Proton acceptor in catalysis.

The protein belongs to the PanB family. Homodecamer; pentamer of dimers. Mg(2+) is required as a cofactor.

Its subcellular location is the cytoplasm. The enzyme catalyses 3-methyl-2-oxobutanoate + (6R)-5,10-methylene-5,6,7,8-tetrahydrofolate + H2O = 2-dehydropantoate + (6S)-5,6,7,8-tetrahydrofolate. It participates in cofactor biosynthesis; (R)-pantothenate biosynthesis; (R)-pantoate from 3-methyl-2-oxobutanoate: step 1/2. Functionally, catalyzes the reversible reaction in which hydroxymethyl group from 5,10-methylenetetrahydrofolate is transferred onto alpha-ketoisovalerate to form ketopantoate. The polypeptide is 3-methyl-2-oxobutanoate hydroxymethyltransferase (Shewanella sp. (strain ANA-3)).